The primary structure comprises 675 residues: UvrABC system protein B (675 aa).

The Helicase ATP-binding domain maps to 32–417 (EGLSDGLAYQ…EHAGQVVEQV (386 aa)). Residue 45 to 52 (GVTGSGKT) participates in ATP binding. The Beta-hairpin signature appears at 98 to 121 (YYDYYQPEAYVPSRDLFIEKDSAI). The region spanning 436-602 (QVDDLMSEIN…QIKKQVKDII (167 aa)) is the Helicase C-terminal domain. The region spanning 634–669 (IKEIAKLEKAMQQAARDLQFEEAAVLRDRISNIKEN) is the UVR domain.

The protein belongs to the UvrB family. Forms a heterotetramer with UvrA during the search for lesions. Interacts with UvrC in an incision complex.

The protein localises to the cytoplasm. In terms of biological role, the UvrABC repair system catalyzes the recognition and processing of DNA lesions. A damage recognition complex composed of 2 UvrA and 2 UvrB subunits scans DNA for abnormalities. Upon binding of the UvrA(2)B(2) complex to a putative damaged site, the DNA wraps around one UvrB monomer. DNA wrap is dependent on ATP binding by UvrB and probably causes local melting of the DNA helix, facilitating insertion of UvrB beta-hairpin between the DNA strands. Then UvrB probes one DNA strand for the presence of a lesion. If a lesion is found the UvrA subunits dissociate and the UvrB-DNA preincision complex is formed. This complex is subsequently bound by UvrC and the second UvrB is released. If no lesion is found, the DNA wraps around the other UvrB subunit that will check the other stand for damage. This is UvrABC system protein B from Neisseria gonorrhoeae (strain ATCC 700825 / FA 1090).